A 318-amino-acid polypeptide reads, in one-letter code: Protoheme IX farnesyltransferase (318 aa).

The next 9 membrane-spanning stretches (helical) occupy residues 33–53 (VMSL…VSVH), 54–74 (PFIG…SGAL), 102–122 (GEAL…LALA), 125–145 (VLAG…YTMW), 154–174 (IVIG…AATG), 181–201 (WLMF…LALF), 225–245 (VHIL…AFSN), 246–266 (IGGP…LLGA), and 288–308 (FFKL…AEAL).

It belongs to the UbiA prenyltransferase family. Protoheme IX farnesyltransferase subfamily. Interacts with CtaA.

It localises to the cell inner membrane. The catalysed reaction is heme b + (2E,6E)-farnesyl diphosphate + H2O = Fe(II)-heme o + diphosphate. The protein operates within porphyrin-containing compound metabolism; heme O biosynthesis; heme O from protoheme: step 1/1. In terms of biological role, converts heme B (protoheme IX) to heme O by substitution of the vinyl group on carbon 2 of heme B porphyrin ring with a hydroxyethyl farnesyl side group. The sequence is that of Protoheme IX farnesyltransferase from Ruegeria pomeroyi (strain ATCC 700808 / DSM 15171 / DSS-3) (Silicibacter pomeroyi).